The chain runs to 572 residues: Hexokinase (572 aa).

In terms of domain architecture, Hexokinase spans 49-492; that stretch reads DEPPISLETV…SGKGAALITA (444 aa). Residues 105–237 form a hexokinase small subdomain region; the sequence is NGTEEGRFIA…DIKVEVVALI (133 aa). D-glucose 6-phosphate is bound by residues 116–120 and serine 185; that span reads DLGGT. Residue 116 to 121 participates in ATP binding; it reads DLGGTN. Residues 185–186, 202–203, and 238–239 contribute to the substrate site; these read SY, TK, and ND. Residues 238–481 form a hexokinase large subdomain region; that stretch reads NDTVGTMVAA…LKFKLLQTAD (244 aa). Aspartate 239 and threonine 263 together coordinate D-glucose 6-phosphate. ATP is bound at residue threonine 263. Residues asparagine 266, glutamate 297, and aspartate 331 each contribute to the substrate site. ATP is bound by residues 336–337, 373–377, and 448–452; these read GK, TKYIS, and STYKY. Residues 446–448 and serine 483 contribute to the D-glucose 6-phosphate site; that span reads DGS.

This sequence belongs to the hexokinase family.

The enzyme catalyses a D-hexose + ATP = a D-hexose 6-phosphate + ADP + H(+). It carries out the reaction D-mannose + ATP = D-mannose 6-phosphate + ADP + H(+). The catalysed reaction is D-fructose + ATP = D-fructose 6-phosphate + ADP + H(+). It catalyses the reaction D-glucose + ATP = D-glucose 6-phosphate + ADP + H(+). The protein operates within carbohydrate metabolism; hexose metabolism. Its pathway is carbohydrate degradation; glycolysis; D-glyceraldehyde 3-phosphate and glycerone phosphate from D-glucose: step 1/4. Its activity is regulated as follows. Activated by glucose-6-phosphate. Inhibited by N-acetylglucosamine, glucosamine, mannoheptulose and ADP. Its function is as follows. Active against glucose, fructose, mannose, maltose and galactose. The chain is Hexokinase from Brugia malayi (Filarial nematode worm).